The primary structure comprises 285 residues: Small ribosomal subunit protein uS3 (285 aa).

One can recognise a KH type-2 domain in the interval 39–107; the sequence is VREFLKKKLK…PVAVNIEEVR (69 aa). A disordered region spans residues 211–285; it reads GDAPVMRGED…RAAPPAAKGE (75 aa). Over residues 217–241 the composition is skewed to basic and acidic residues; it reads RGEDRPEDDRRRRNPRGDRPGDRRG. Gly residues predominate over residues 242 to 255; the sequence is PGAGRGGPGAGRGP. 2 stretches are compositionally biased toward low complexity: residues 256–267 and 276–285; these read ADGASAAPSGDA and RAAPPAAKGE.

It belongs to the universal ribosomal protein uS3 family. In terms of assembly, part of the 30S ribosomal subunit. Forms a tight complex with proteins S10 and S14.

Functionally, binds the lower part of the 30S subunit head. Binds mRNA in the 70S ribosome, positioning it for translation. This is Small ribosomal subunit protein uS3 from Leptothrix cholodnii (strain ATCC 51168 / LMG 8142 / SP-6) (Leptothrix discophora (strain SP-6)).